The chain runs to 256 residues: Probable galactose dehydrogenase GalD (256 aa).

NAD(+)-binding positions include 20-23 (GGGS), 71-72 (DL), and N98. S150 is a substrate binding site. Catalysis depends on Y163, which acts as the Proton acceptor. NAD(+) is bound by residues 163–167 (YSTAK) and I196.

This sequence belongs to the short-chain dehydrogenases/reductases (SDR) family.

Functionally, involved in the degradation of galactose via the DeLey-Doudoroff pathway. Catalyzes the oxidation of galactose in the presence of NAD(+). Uses NAD(+) as a hydrogen acceptor more efficiently than NADP(+). This is Probable galactose dehydrogenase GalD (galD) from Rhizobium meliloti (strain 1021) (Ensifer meliloti).